We begin with the raw amino-acid sequence, 464 residues long: Myrosinase 1 (464 aa).

Q19 lines the substrate pocket. Zn(2+)-binding residues include H39 and D52. H122 and N166 together coordinate substrate. E167 functions as the Nucleophile in the catalytic mechanism. The Proton donor role is filled by E374. N397 is a glycosylation site (N-linked (GlcNAc...) asparagine).

Homodimer. Expressed in the skeletal muscle tissues surrounding the head, abdomen and thorax. Not expressed in flight muscles (at protein level).

The enzyme catalyses a thioglucoside + H2O = a sugar + a thiol.. Hydrolyzes glucosinolates to a labile aglycone. This rapidly undergoes spontaneous rearrangement, eliminating sulfur to yield a number of toxic metabolites. Thereby developing a chemical defense system that exploits and mimics the host plant. This is Myrosinase 1 from Brevicoryne brassicae (Mealy cabbage aphid).